The chain runs to 627 residues: MAQEVSSSVAFIHRLLYTALRGLLGDRLKRGLKKEQVSTLYQNITLVEPRLLQPYERVIRNFLREIKLQSTEMENLAIAVKRAQDKAAIQLSELEEEMDQRIQAVENESRKDEKRKAEEALTDLRRQYETEVGDLQVTIKRLKKLEEQSRQISQKQDVTALKKQIHDLTMENQKLKKELLEAQTNVAFLQSELDALKSDYADQSLNSERDLEIIREYTEDRSSLERQIEILQTANRKLHDSNDGLRSALENTYSKLNRSLRINNISPGNTISRSSPKFNHHSSQPLAYDRSFHSSYADEDCDSLALCDPLQKMNYEVDSLPESCFDSGLSTLRDNECDSEVDYKHQGEFQTLHRTEESLGGDASDTDVPDIRDEEAFDSESVASVLHWQPQGSAGEGSTLSSSRKPISALSLQTDMVDNTSKVTSQKAYKIVLAGDAAVGKSSFLMRLCKNEFQGNTSATLGVDFQMKTLIVDGEQTVLQLWDTAGQERFRSIAKSYFRKADGVLLLYDVTCEKSFLNVREWVDMVEDGTHRTIPIMLVGNKADLRDVDNAENQKCISAYLGEKLAMTYGALFCETSAKDGSNVVEAVLHLAREVKKRTEDDDSRSITSLAGSTSKKSLQMKNCCNG.

Positions 55 to 245 form a coiled coil; the sequence is YERVIRNFLR…RKLHDSNDGL (191 aa). Phosphoserine is present on residues serine 266 and serine 272. GTP is bound by residues 438–443, 541–544, and 578–579; these read AVGKSS, NKAD, and AK.

This sequence belongs to the small GTPase superfamily. Rab family. In terms of assembly, homodimer. Interacts with the dynein-dynactin complex.

It localises to the cytoplasm. It is found in the perinuclear region. Its function is as follows. Binds predominantly GDP, and also GTP. Acts as a dynein adapter protein that activates dynein-mediated transport and dynein-dynactin motility on microtubules. This Mus musculus (Mouse) protein is Ras and EF-hand domain-containing protein homolog (Rasef).